We begin with the raw amino-acid sequence, 382 residues long: Manganese peroxidase H4 (382 aa).

An N-terminal signal peptide occupies residues 1–24; it reads MAFGSLLAFVALAAITRAAPTAES. Disulfide bonds link Cys27–Cys39, Cys38–Cys313, Cys57–Cys141, Cys277–Cys344, and Cys366–Cys373. 2 residues coordinate Mn(2+): Glu59 and Glu63. His70 (proton acceptor) is an active-site residue. Ca(2+) is bound by residues Asp71, Gly86, Asp88, and Ser90. N-linked (GlcNAc...) asparagine glycosylation is found at Asn100 and Asn155. Residue His197 participates in heme b binding. Thr198 lines the Ca(2+) pocket. Asp203 contacts Mn(2+). 4 residues coordinate Ca(2+): Asp215, Thr217, Thr220, and Asp222. Asn241 carries an N-linked (GlcNAc...) asparagine glycan.

The protein belongs to the peroxidase family. Ligninase subfamily. Requires heme b as cofactor. The cofactor is Ca(2+).

It is found in the secreted. It catalyses the reaction 2 Mn(2+) + H2O2 + 2 H(+) = 2 Mn(3+) + 2 H2O. Its function is as follows. Catalyzes the oxidation of Mn(2+) to Mn(3+). The latter, acting as a diffusible redox mediator, is capable of oxidizing a variety of lignin compounds. The chain is Manganese peroxidase H4 from Phanerodontia chrysosporium (White-rot fungus).